The following is a 118-amino-acid chain: UPF0295 protein BCE33L0445 (118 aa).

2 helical membrane-spanning segments follow: residues 12 to 32 (IRTF…LGVF) and 43 to 63 (FMMV…WIGM).

The protein belongs to the UPF0295 family.

Its subcellular location is the cell membrane. This Bacillus cereus (strain ZK / E33L) protein is UPF0295 protein BCE33L0445.